Consider the following 196-residue polypeptide: MLERIKGCFTESIQTQIAAAEALPDAISCAAMALVQSLLNGNKILCCGNGTSAANAQHFAASMINRFETERPSLPAIALNADNVVLTAITNDRLHDEVYAKQVRALGQAGDVLLAISTRGNSRDIVKAVEAAVTRDMTIVALTGYDGGELAGLLGQLDVEIRIPSHRGARVQELHMLTVNCLCDLIDNTLFPHQND.

Residues 34–196 form the SIS domain; that stretch reads LVQSLLNGNK…DNTLFPHQND (163 aa).

This sequence belongs to the SIS family. DiaA subfamily. As to quaternary structure, homotetramer; dimer of dimers.

Its function is as follows. Required for the timely initiation of chromosomal replication via direct interactions with the DnaA initiator protein. This chain is DnaA initiator-associating protein DiaA, found in Yersinia pestis bv. Antiqua (strain Antiqua).